A 276-amino-acid polypeptide reads, in one-letter code: Large ribosomal subunit protein uL2 (276 aa).

Residues Val224–Asp265 are disordered.

The protein belongs to the universal ribosomal protein uL2 family. Part of the 50S ribosomal subunit. Forms a bridge to the 30S subunit in the 70S ribosome.

Its function is as follows. One of the primary rRNA binding proteins. Required for association of the 30S and 50S subunits to form the 70S ribosome, for tRNA binding and peptide bond formation. It has been suggested to have peptidyltransferase activity; this is somewhat controversial. Makes several contacts with the 16S rRNA in the 70S ribosome. This is Large ribosomal subunit protein uL2 from Dichelobacter nodosus (strain VCS1703A).